We begin with the raw amino-acid sequence, 122 residues long: Large ribosomal subunit protein uL18 (122 aa).

The span at 1-16 (MFKKVDRKASRQKKQM) shows a compositional bias: basic residues. Positions 1–29 (MFKKVDRKASRQKKQMSIRNKISGTPERP) are disordered.

This sequence belongs to the universal ribosomal protein uL18 family. In terms of assembly, part of the 50S ribosomal subunit; part of the 5S rRNA/L5/L18/L25 subcomplex. Contacts the 5S and 23S rRNAs.

In terms of biological role, this is one of the proteins that bind and probably mediate the attachment of the 5S RNA into the large ribosomal subunit, where it forms part of the central protuberance. The sequence is that of Large ribosomal subunit protein uL18 from Fusobacterium nucleatum subsp. nucleatum (strain ATCC 25586 / DSM 15643 / BCRC 10681 / CIP 101130 / JCM 8532 / KCTC 2640 / LMG 13131 / VPI 4355).